Here is a 462-residue protein sequence, read N- to C-terminus: Cysteine--tRNA ligase (462 aa).

A Zn(2+)-binding site is contributed by C28. Positions V30 to H40 match the 'HIGH' region motif. Residues C209, H234, and E238 each coordinate Zn(2+). The 'KMSKS' region signature appears at K266–S270. ATP is bound at residue K269.

Belongs to the class-I aminoacyl-tRNA synthetase family. As to quaternary structure, monomer. Requires Zn(2+) as cofactor.

The protein resides in the cytoplasm. The enzyme catalyses tRNA(Cys) + L-cysteine + ATP = L-cysteinyl-tRNA(Cys) + AMP + diphosphate. The protein is Cysteine--tRNA ligase of Baumannia cicadellinicola subsp. Homalodisca coagulata.